The chain runs to 109 residues: U4-lycotoxin-Ls1b (109 aa).

Positions 1 to 22 (MKVLVLFSVLFLTLFSYSSTEA) are cleaved as a signal peptide. Positions 23 to 44 (IDEFDSDAEDDMLSLMANEQVR) are excised as a propeptide. Residues 45-88 (AKACTPRLHDCSHDRHSCCRGELSKDVCYCFYPEGEDKTEVCSC) form a knottin domain region. Intrachain disulfides connect Cys-48–Cys-63, Cys-55–Cys-72, Cys-62–Cys-88, and Cys-74–Cys-86. Residues 89–108 (QQPKSHKYIEKVVDKAKTVV) form a linear cationic cytotoxin domain region.

The protein belongs to the neurotoxin 19 (CSTX) family. 05 (U4-Lctx) subfamily. As to expression, expressed by the venom gland.

The protein localises to the secreted. In terms of biological role, enhances the high-affinity desensitization of human P2RX3 purinoceptors. The protein is U4-lycotoxin-Ls1b of Lycosa singoriensis (Wolf spider).